The following is a 441-amino-acid chain: Methylenetetrahydrofolate--tRNA-(uracil-5-)-methyltransferase TrmFO (441 aa).

7–12 is a binding site for FAD; that stretch reads GAGLSG.

The protein belongs to the MnmG family. TrmFO subfamily. FAD serves as cofactor.

Its subcellular location is the cytoplasm. The catalysed reaction is uridine(54) in tRNA + (6R)-5,10-methylene-5,6,7,8-tetrahydrofolate + NADH + H(+) = 5-methyluridine(54) in tRNA + (6S)-5,6,7,8-tetrahydrofolate + NAD(+). It carries out the reaction uridine(54) in tRNA + (6R)-5,10-methylene-5,6,7,8-tetrahydrofolate + NADPH + H(+) = 5-methyluridine(54) in tRNA + (6S)-5,6,7,8-tetrahydrofolate + NADP(+). Functionally, catalyzes the folate-dependent formation of 5-methyl-uridine at position 54 (M-5-U54) in all tRNAs. The sequence is that of Methylenetetrahydrofolate--tRNA-(uracil-5-)-methyltransferase TrmFO from Pseudothermotoga lettingae (strain ATCC BAA-301 / DSM 14385 / NBRC 107922 / TMO) (Thermotoga lettingae).